A 389-amino-acid chain; its full sequence is Urea transporter 1 (389 aa).

A run of 5 helical transmembrane segments spans residues 53–73 (PVVL…VFVN), 91–110 (WWAL…ALLL), 116–136 (LIAS…MAVF), 143–163 (FWWL…FSSA), and 173–193 (LPVF…ATGH). Asn-211 carries N-linked (GlcNAc...) asparagine glycosylation. 4 helical membrane-spanning segments follow: residues 242–262 (GGIF…HAAI), 281–301 (IYFG…GGMF), 310–330 (LLAL…ANFM), and 333–353 (VGLP…LIMT).

It belongs to the urea transporter family. As to quaternary structure, homotrimer; each subunit contains a pore through which urea permeates. Identified in a complex with STOM. Detected in erythrocytes (at protein level). Expressed in spleen erythroblasts and tumoral kidney.

It is found in the cell membrane. It localises to the basolateral cell membrane. It catalyses the reaction urea(in) = urea(out). With respect to regulation, inhibited by phloretin and para-chloromercuribenzene sulfonate. Functionally, mediates the transport of urea driven by a concentration gradient across the cell membrane of erythrocytes. Also mediates the transport of urea across the cell membrane of the renal inner medullary collecting duct which is critical to the urinary concentrating mechanism. Facilitates water transport in erythrocytes. The polypeptide is Urea transporter 1 (SLC14A1) (Homo sapiens (Human)).